The following is a 688-amino-acid chain: Polyphosphate kinase (688 aa).

ATP is bound at residue Asn45. Mg(2+)-binding residues include Arg375 and Arg405. One can recognise a PLD phosphodiesterase domain in the interval 430-464 (PGLKIHAKLFLISRKEGDDVVRYAHIGTGNFNEKT). His435 acts as the Phosphohistidine intermediate in catalysis. Residues Tyr468, Arg564, and His592 each contribute to the ATP site.

It belongs to the polyphosphate kinase 1 (PPK1) family. It depends on Mg(2+) as a cofactor. Post-translationally, an intermediate of this reaction is the autophosphorylated ppk in which a phosphate is covalently linked to a histidine residue through a N-P bond.

The enzyme catalyses [phosphate](n) + ATP = [phosphate](n+1) + ADP. Functionally, catalyzes the reversible transfer of the terminal phosphate of ATP to form a long-chain polyphosphate (polyP). This Salmonella typhimurium (strain LT2 / SGSC1412 / ATCC 700720) protein is Polyphosphate kinase.